A 175-amino-acid polypeptide reads, in one-letter code: Large ribosomal subunit protein uL10 (175 aa).

The protein belongs to the universal ribosomal protein uL10 family. Part of the ribosomal stalk of the 50S ribosomal subunit. The N-terminus interacts with L11 and the large rRNA to form the base of the stalk. The C-terminus forms an elongated spine to which L12 dimers bind in a sequential fashion forming a multimeric L10(L12)X complex.

Functionally, forms part of the ribosomal stalk, playing a central role in the interaction of the ribosome with GTP-bound translation factors. In Thermobifida fusca (strain YX), this protein is Large ribosomal subunit protein uL10.